The sequence spans 58 residues: Small ribosomal subunit protein bS21 (58 aa).

The tract at residues 31 to 58 (DLKRIRHHETPVEKYKRKAQQRRRSRRR) is disordered. A compositionally biased stretch (basic residues) spans 45-58 (YKRKAQQRRRSRRR).

The protein belongs to the bacterial ribosomal protein bS21 family.

This chain is Small ribosomal subunit protein bS21, found in Prochlorococcus marinus (strain MIT 9303).